Reading from the N-terminus, the 145-residue chain is MDPELQAIREARLAQLKNNSGGTNGDRNSGANNGGGENSAPVGAAIANFLEPQALERLSRVALVRRDRAQAVETYLKKLIATNNVTHKITEAEIVSILNGIAKQQNSQNNSKIIFERKDFSEDLNSFDKQNAKNDDDEDDDDFFD.

Met1 is subject to N-acetylmethionine. The segment at 15 to 41 (QLKNNSGGTNGDRNSGANNGGGENSAP) is disordered. Polar residues predominate over residues 16–27 (LKNNSGGTNGDR). 2 positions are modified to phosphoserine: Ser121 and Ser126. Residues 125–145 (NSFDKQNAKNDDDEDDDDFFD) are disordered. Acidic residues predominate over residues 135 to 145 (DDDEDDDDFFD).

The protein belongs to the PDCD5 family.

This is an uncharacterized protein from Saccharomyces cerevisiae (strain ATCC 204508 / S288c) (Baker's yeast).